The following is a 364-amino-acid chain: Anhydro-N-acetylmuramic acid kinase (364 aa).

11-18 (GSSLDGID) is an ATP binding site.

This sequence belongs to the anhydro-N-acetylmuramic acid kinase family.

It carries out the reaction 1,6-anhydro-N-acetyl-beta-muramate + ATP + H2O = N-acetyl-D-muramate 6-phosphate + ADP + H(+). The protein operates within amino-sugar metabolism; 1,6-anhydro-N-acetylmuramate degradation. It functions in the pathway cell wall biogenesis; peptidoglycan recycling. Functionally, catalyzes the specific phosphorylation of 1,6-anhydro-N-acetylmuramic acid (anhMurNAc) with the simultaneous cleavage of the 1,6-anhydro ring, generating MurNAc-6-P. Is required for the utilization of anhMurNAc either imported from the medium or derived from its own cell wall murein, and thus plays a role in cell wall recycling. This is Anhydro-N-acetylmuramic acid kinase from Pseudomonas syringae pv. syringae (strain B728a).